Reading from the N-terminus, the 147-residue chain is Probable disulfide formation protein (147 aa).

A helical membrane pass occupies residues N9 to Y28. C38 and C41 are disulfide-bonded. The next 2 membrane-spanning stretches (helical) occupy residues Y43–T62 and Y69–L86. A disulfide bridge links C99 with C106. Residues G115–F138 traverse the membrane as a helical segment.

The protein belongs to the DsbB family. BdbC subfamily.

It localises to the cell inner membrane. Functionally, required for disulfide bond formation in some proteins. In Coxiella burnetii (strain CbuK_Q154) (Coxiella burnetii (strain Q154)), this protein is Probable disulfide formation protein.